Consider the following 236-residue polypeptide: Biosynthetic peptidoglycan transglycosylase (236 aa).

The chain crosses the membrane as a helical span at residues alanine 12–proline 31.

It belongs to the glycosyltransferase 51 family.

Its subcellular location is the cell inner membrane. The catalysed reaction is [GlcNAc-(1-&gt;4)-Mur2Ac(oyl-L-Ala-gamma-D-Glu-L-Lys-D-Ala-D-Ala)](n)-di-trans,octa-cis-undecaprenyl diphosphate + beta-D-GlcNAc-(1-&gt;4)-Mur2Ac(oyl-L-Ala-gamma-D-Glu-L-Lys-D-Ala-D-Ala)-di-trans,octa-cis-undecaprenyl diphosphate = [GlcNAc-(1-&gt;4)-Mur2Ac(oyl-L-Ala-gamma-D-Glu-L-Lys-D-Ala-D-Ala)](n+1)-di-trans,octa-cis-undecaprenyl diphosphate + di-trans,octa-cis-undecaprenyl diphosphate + H(+). It functions in the pathway cell wall biogenesis; peptidoglycan biosynthesis. Its function is as follows. Peptidoglycan polymerase that catalyzes glycan chain elongation from lipid-linked precursors. The chain is Biosynthetic peptidoglycan transglycosylase from Pseudomonas putida (strain W619).